The following is a 1076-amino-acid chain: Atos homolog protein A (1076 aa).

The transactivation domain 1 (TAD1) stretch occupies residues 24-32 (ALLITEGRT). 2 disordered regions span residues 700–721 (ESMSSNKDSKRPKTCEQNTQLN) and 739–765 (SDQLKNEQDKQEDPTNEKSQNYSQRRS). Over residues 739–754 (SDQLKNEQDKQEDPTN) the composition is skewed to basic and acidic residues. Residues 878-935 (LLGNFEESVLNYRFDPLGIVDGFTAEVGASGAFCPTHLTLPVEVSFYSVSDDNAPSPY) are required for macropage invasion. Positions 962–970 (FNPNKTVVK) are transactivation domain 2 (TAD2).

It belongs to the ATOS family.

It is found in the nucleus. Functionally, transcription regulator that syncronizes transcriptional and translational programs to promote macrophage invasion of tissues. The protein is Atos homolog protein A of Homo sapiens (Human).